A 335-amino-acid polypeptide reads, in one-letter code: Phosphate acyltransferase (335 aa).

It belongs to the PlsX family. Homodimer. Probably interacts with PlsY.

It is found in the cytoplasm. It carries out the reaction a fatty acyl-[ACP] + phosphate = an acyl phosphate + holo-[ACP]. The protein operates within lipid metabolism; phospholipid metabolism. Catalyzes the reversible formation of acyl-phosphate (acyl-PO(4)) from acyl-[acyl-carrier-protein] (acyl-ACP). This enzyme utilizes acyl-ACP as fatty acyl donor, but not acyl-CoA. In Desulfitobacterium hafniense (strain Y51), this protein is Phosphate acyltransferase.